The chain runs to 142 residues: Putative pre-16S rRNA nuclease (142 aa).

This sequence belongs to the YqgF nuclease family.

The protein localises to the cytoplasm. In terms of biological role, could be a nuclease involved in processing of the 5'-end of pre-16S rRNA. The sequence is that of Putative pre-16S rRNA nuclease from Lawsonia intracellularis (strain PHE/MN1-00).